Here is a 296-residue protein sequence, read N- to C-terminus: 33 kDa chaperonin (296 aa).

2 disulfides stabilise this stretch: C238-C240 and C271-C274.

The protein belongs to the HSP33 family. Post-translationally, under oxidizing conditions two disulfide bonds are formed involving the reactive cysteines. Under reducing conditions zinc is bound to the reactive cysteines and the protein is inactive.

It localises to the cytoplasm. Redox regulated molecular chaperone. Protects both thermally unfolding and oxidatively damaged proteins from irreversible aggregation. Plays an important role in the bacterial defense system toward oxidative stress. The protein is 33 kDa chaperonin of Clostridium botulinum (strain 657 / Type Ba4).